A 270-amino-acid polypeptide reads, in one-letter code: Zinc finger protein ZAT2 (270 aa).

Polar residues-rich tracts occupy residues 1-28 and 36-48; these read MSNT…YNQN and LTNN…SSSP. Residues 1–64 form a disordered region; that stretch reads MSNTSNSDPN…QPDPDASQIA (64 aa). Residues 65–87 form a C2H2-type 1 zinc finger; the sequence is RPCTECGKQFGSLKALFGHMRCH. The disordered stretch occupies residues 95–119; it reads INPPSNFKRRINSNAASSSSSWDPS. Residues 106–115 show a composition bias toward low complexity; that stretch reads NSNAASSSSS. 2 C2H2-type zinc fingers span residues 148 to 170 and 211 to 233; these read FECD…RATH and HRCN…MRCH.

In terms of assembly, interacts (via the EAR motif) with TPL. As to expression, expressed exclusively in pollen.

It is found in the nucleus. Functionally, mediates the regulation of male germ cell division by DUO1. This is Zinc finger protein ZAT2 from Arabidopsis thaliana (Mouse-ear cress).